The primary structure comprises 81 residues: Small ribosomal subunit protein bS16 (81 aa).

The protein belongs to the bacterial ribosomal protein bS16 family.

The chain is Small ribosomal subunit protein bS16 from Nautilia profundicola (strain ATCC BAA-1463 / DSM 18972 / AmH).